A 94-amino-acid chain; its full sequence is Pyrimidine/purine nucleoside phosphorylase (94 aa).

Belongs to the nucleoside phosphorylase PpnP family.

It catalyses the reaction a purine D-ribonucleoside + phosphate = a purine nucleobase + alpha-D-ribose 1-phosphate. It carries out the reaction adenosine + phosphate = alpha-D-ribose 1-phosphate + adenine. The catalysed reaction is cytidine + phosphate = cytosine + alpha-D-ribose 1-phosphate. The enzyme catalyses guanosine + phosphate = alpha-D-ribose 1-phosphate + guanine. It catalyses the reaction inosine + phosphate = alpha-D-ribose 1-phosphate + hypoxanthine. It carries out the reaction thymidine + phosphate = 2-deoxy-alpha-D-ribose 1-phosphate + thymine. The catalysed reaction is uridine + phosphate = alpha-D-ribose 1-phosphate + uracil. The enzyme catalyses xanthosine + phosphate = alpha-D-ribose 1-phosphate + xanthine. Catalyzes the phosphorolysis of diverse nucleosides, yielding D-ribose 1-phosphate and the respective free bases. Can use uridine, adenosine, guanosine, cytidine, thymidine, inosine and xanthosine as substrates. Also catalyzes the reverse reactions. This chain is Pyrimidine/purine nucleoside phosphorylase, found in Salmonella agona (strain SL483).